A 142-amino-acid chain; its full sequence is Hemoglobin subunit alpha-1 (142 aa).

At S1 the chain carries N-acetylserine. One can recognise a Globin domain in the interval 1–142 (SLSDKDKAAV…VALALAERYR (142 aa)). Residue H59 coordinates O2. H88 is a binding site for heme b.

The protein belongs to the globin family. Hb1 is a heterotetramer of two alpha-1 chains and two beta chains. HbC is a heterotetramer of two alpha-1 chains and two beta-C chains. In terms of tissue distribution, red blood cells.

In terms of biological role, involved in oxygen transport from gills to the various peripheral tissues. In Trematomus newnesi (Dusky notothen), this protein is Hemoglobin subunit alpha-1 (hba1).